We begin with the raw amino-acid sequence, 369 residues long: Xylene/toluene monooxygenase hydroxylase component XylM (369 aa).

Transmembrane regions (helical) follow at residues 8-28, 60-80, and 91-111; these read LIPVVTACGLIGFYYGGYWVW, LTQYLQLPLMIGLYGLLVFGV, and LQVAGCILSLAWLSGVPTLPV. 5 residues coordinate Fe cation: His-113, His-117, His-143, His-147, and His-148. The helical transmembrane segment at 207–227 threads the bilayer; the sequence is VALLLALPGLVSYLGGPALGL. Residues His-282, His-285, and His-286 each contribute to the Fe cation site. A helical membrane pass occupies residues 305 to 325; sequence MPSLFVCFLLGLIPPLWFALI.

Belongs to the fatty acid desaturase type 1 family. AlkB subfamily. The xylene/toluene monooxygenase is composed of two subunits: the electron transfer component XylA and the hydroxylase component XylM. The cofactor is Fe(2+).

The protein localises to the cell inner membrane. It catalyses the reaction m-xylene + 2 reduced [2Fe-2S]-[ferredoxin] + O2 + 2 H(+) = 3-methylbenzyl alcohol + 2 oxidized [2Fe-2S]-[ferredoxin] + H2O. The enzyme catalyses p-xylene + 2 reduced [2Fe-2S]-[ferredoxin] + O2 + 2 H(+) = 4-methylbenzyl alcohol + 2 oxidized [2Fe-2S]-[ferredoxin] + H2O. It carries out the reaction toluene + 2 reduced [2Fe-2S]-[ferredoxin] + O2 + 2 H(+) = benzyl alcohol + 2 oxidized [2Fe-2S]-[ferredoxin] + H2O. Component of a monooxygenase that catalyzes the first step in the degradation of xylenes and toluenes. XylM catalyzes the hydroxylation of the methyl side chain of xylenes and toluenes. The electrons are provided by the electron transfer component XylA. The best substrates are m-xylene and p-xylene, followed by toluene. Shows weak activity with o-xylene. In vitro, is also active with substituted compounds, such as chlorotoluenes. Cannot use benzyl alcohol. This is Xylene/toluene monooxygenase hydroxylase component XylM from Pseudomonas putida (Arthrobacter siderocapsulatus).